Consider the following 503-residue polypeptide: ATP synthase subunit alpha (503 aa).

170–177 contributes to the ATP binding site; that stretch reads GDRQTGKT.

This sequence belongs to the ATPase alpha/beta chains family. As to quaternary structure, F-type ATPases have 2 components, CF(1) - the catalytic core - and CF(0) - the membrane proton channel. CF(1) has five subunits: alpha(3), beta(3), gamma(1), delta(1), epsilon(1). CF(0) has three main subunits: a(1), b(2) and c(9-12). The alpha and beta chains form an alternating ring which encloses part of the gamma chain. CF(1) is attached to CF(0) by a central stalk formed by the gamma and epsilon chains, while a peripheral stalk is formed by the delta and b chains.

It is found in the cell membrane. The enzyme catalyses ATP + H2O + 4 H(+)(in) = ADP + phosphate + 5 H(+)(out). Functionally, produces ATP from ADP in the presence of a proton gradient across the membrane. The alpha chain is a regulatory subunit. In Brevibacillus brevis (strain 47 / JCM 6285 / NBRC 100599), this protein is ATP synthase subunit alpha.